A 241-amino-acid chain; its full sequence is ATP synthase subunit a (241 aa).

5 helical membrane-spanning segments follow: residues Gly30–Gly50, Phe91–Trp111, Ile128–Ser148, Leu193–Leu213, and Gly214–Gly234.

This sequence belongs to the ATPase A chain family. F-type ATPases have 2 components, CF(1) - the catalytic core - and CF(0) - the membrane proton channel. CF(1) has five subunits: alpha(3), beta(3), gamma(1), delta(1), epsilon(1). CF(0) has four main subunits: a, b, b' and c.

The protein resides in the cellular thylakoid membrane. Key component of the proton channel; it plays a direct role in the translocation of protons across the membrane. This chain is ATP synthase subunit a, found in Prochlorococcus marinus (strain MIT 9313).